The following is a 524-amino-acid chain: Probable endopeptidase p60 (524 aa).

Positions 1–27 are cleaved as a signal peptide; sequence MNMKKATIAATAGIAVTAFAAPTIASA. Residues 28 to 71 enclose the LysM 1 domain; it reads STVVVEAGDTLWGIAQSKGTTVDALKKANNLTSDKIVPGQKLQV. The region spanning 78-142 is the SH3b domain; the sequence is KTEKSVSATW…VNGKYLGDAV (65 aa). A disordered region spans residues 150 to 188; that stretch reads QEVKQETTKQTAPAAETKTEVKQSTPAPTAPKAAETKTA. Residues 174–188 are compositionally biased toward low complexity; that stretch reads TPAPTAPKAAETKTA. The LysM 2 domain maps to 196–239; sequence TTHTVKSGDTIWALSVKYGASVQDLMSWNNLSSSSIYVGQKIAV. A compositionally biased stretch (low complexity) spans 272 to 299; it reads NTNTTVKKEVTTQTQTNTTKAPAQAAKP. Positions 272 to 313 are disordered; it reads NTNTTVKKEVTTQTQTNTTKAPAQAAKPAPAPAPAPTVNTNA. One can recognise a LysM 3 domain in the interval 314-357; it reads STYTVKSGDSLSKIANTFGTSVSKIKALNNLTSDNLQVGTVLKV. The tract at residues 360 to 408 is disordered; the sequence is TVPTTNTNNNSNTTAPTTNTSNNNTSSNTSTPSKNTNTNTNQGSSNSAS. Positions 362 to 408 are enriched in low complexity; sequence PTTNTNNNSNTTAPTTNTSNNNTSSNTSTPSKNTNTNTNQGSSNSAS. A NlpC/P60 domain is found at 406 to 524; it reads SASASALIAE…GKYLVGFGRV (119 aa). Cys436 (nucleophile) is an active-site residue. His486 acts as the Proton acceptor in catalysis. Residue Asn498 is part of the active site.

Belongs to the peptidase C40 family.

Functionally, this major extracellular protein may be involved in the invasion of non-professional phagocytic cells by Listeria. This Listeria welshimeri protein is Probable endopeptidase p60 (iap).